A 266-amino-acid chain; its full sequence is ATP synthase subunit a (266 aa).

7 consecutive transmembrane segments (helical) span residues 28–48 (ISFTNSALWMVIAMAALAIFM), 90–110 (LIFTLFMFILFANLLGLVPLF), 125–145 (VTVTATLAAIAFGTVLVVGFT), 158–178 (HGTPMALIWLIPGIEAFSFIL), 187–207 (LFVAMTAGHVLLEVLANFIVN), 216–236 (AFLAGYYTLVGIPTFLLMIGI), and 239–259 (LEFLVCAIQAYVFALLTSLYL).

The protein belongs to the ATPase A chain family. As to quaternary structure, F-type ATPases have 2 components, CF(1) - the catalytic core - and CF(0) - the membrane proton channel. CF(1) has five subunits: alpha(3), beta(3), gamma(1), delta(1), epsilon(1). CF(0) has three main subunits: a(1), b(2) and c(9-12). The alpha and beta chains form an alternating ring which encloses part of the gamma chain. CF(1) is attached to CF(0) by a central stalk formed by the gamma and epsilon chains, while a peripheral stalk is formed by the delta and b chains.

The protein localises to the cell inner membrane. Its function is as follows. Key component of the proton channel; it plays a direct role in the translocation of protons across the membrane. The protein is ATP synthase subunit a of Zymomonas mobilis subsp. mobilis (strain ATCC 31821 / ZM4 / CP4).